A 180-amino-acid polypeptide reads, in one-letter code: Endogenous alpha-amylase/subtilisin inhibitor (180 aa).

Cystine bridges form between cysteine 42-cysteine 89 and cysteine 143-cysteine 147.

This sequence belongs to the protease inhibitor I3 (leguminous Kunitz-type inhibitor) family.

Its function is as follows. Inhibitor of endogenous alpha-amylase (wheat also produces an exogenous inhibitor which inactivates alpha-amylase from animal and insect origin). This inhibitor can also inhibit subtilisin. This chain is Endogenous alpha-amylase/subtilisin inhibitor, found in Triticum aestivum (Wheat).